Consider the following 590-residue polypeptide: Aspartate--tRNA(Asp/Asn) ligase (590 aa).

Residue Glu170 coordinates L-aspartate. The segment at 194–197 (QLFK) is aspartate. Position 216 (Arg216) interacts with L-aspartate. ATP-binding positions include 216-218 (RDE) and Gln225. Position 448 (His448) interacts with L-aspartate. Glu482 serves as a coordination point for ATP. Arg489 is a binding site for L-aspartate. Residue 534-537 (GWDR) participates in ATP binding. The tract at residues 559 to 590 (GGVDPLTEAPAPITAQQRKESGIDAKPGKDGA) is disordered. Over residues 575 to 590 (QRKESGIDAKPGKDGA) the composition is skewed to basic and acidic residues.

The protein belongs to the class-II aminoacyl-tRNA synthetase family. Type 1 subfamily. Homodimer.

It localises to the cytoplasm. The catalysed reaction is tRNA(Asx) + L-aspartate + ATP = L-aspartyl-tRNA(Asx) + AMP + diphosphate. In terms of biological role, aspartyl-tRNA synthetase with relaxed tRNA specificity since it is able to aspartylate not only its cognate tRNA(Asp) but also tRNA(Asn). Reaction proceeds in two steps: L-aspartate is first activated by ATP to form Asp-AMP and then transferred to the acceptor end of tRNA(Asp/Asn). This is Aspartate--tRNA(Asp/Asn) ligase from Mycolicibacterium gilvum (strain PYR-GCK) (Mycobacterium gilvum (strain PYR-GCK)).